The following is a 63-amino-acid chain: Transmembrane protein ZNF593OS (63 aa).

Residues 30–50 form a helical membrane-spanning segment; it reads LAGVVATVLAVLGLGGSCYAV.

It localises to the membrane. This Homo sapiens (Human) protein is Transmembrane protein ZNF593OS.